We begin with the raw amino-acid sequence, 70 residues long: Small ribosomal subunit protein bS21A (70 aa).

It belongs to the bacterial ribosomal protein bS21 family.

This Burkholderia orbicola (strain AU 1054) protein is Small ribosomal subunit protein bS21A.